A 207-amino-acid polypeptide reads, in one-letter code: Guanylate kinase (207 aa).

In terms of domain architecture, Guanylate kinase-like spans 4–184 (GTLYIVSAPS…ALLDLKTIIR (181 aa)). 11-18 (APSGAGKS) contacts ATP.

It belongs to the guanylate kinase family.

Its subcellular location is the cytoplasm. It catalyses the reaction GMP + ATP = GDP + ADP. In terms of biological role, essential for recycling GMP and indirectly, cGMP. The polypeptide is Guanylate kinase (Sodalis glossinidius (strain morsitans)).